Reading from the N-terminus, the 55-residue chain is MLRLSRLDMRWPRRDTLNTTTSAWPRYTLIDLSLRLSVADCREIWREGLESMWQK.

This is an uncharacterized protein from Thermoproteus tenax (TTV1).